Here is a 195-residue protein sequence, read N- to C-terminus: dCTP deaminase (195 aa).

Residues 105 to 110, Asp-123, 131 to 133, Gln-152, Tyr-166, Lys-173, and Gln-177 each bind dCTP; these read RSSLGR and TLE. Glu-133 acts as the Proton donor/acceptor in catalysis. A disordered region spans residues 159-195; the sequence is KSPAERPYGAERGSKYQGQTGPQASRIQGDREFGGDQ. Basic and acidic residues predominate over residues 160–172; that stretch reads SPAERPYGAERGS. The segment covering 174 to 184 has biased composition (polar residues); it reads YQGQTGPQASR. Residues 186–195 show a composition bias toward basic and acidic residues; that stretch reads QGDREFGGDQ.

Belongs to the dCTP deaminase family. As to quaternary structure, homotrimer.

The catalysed reaction is dCTP + H2O + H(+) = dUTP + NH4(+). The protein operates within pyrimidine metabolism; dUMP biosynthesis; dUMP from dCTP (dUTP route): step 1/2. In terms of biological role, catalyzes the deamination of dCTP to dUTP. The chain is dCTP deaminase from Natronomonas pharaonis (strain ATCC 35678 / DSM 2160 / CIP 103997 / JCM 8858 / NBRC 14720 / NCIMB 2260 / Gabara) (Halobacterium pharaonis).